We begin with the raw amino-acid sequence, 239 residues long: Ribosomal RNA small subunit methyltransferase G (239 aa).

Residues Gly78, Phe83, 129 to 130, and Arg148 each bind S-adenosyl-L-methionine; that span reads AE.

This sequence belongs to the methyltransferase superfamily. RNA methyltransferase RsmG family.

The protein resides in the cytoplasm. Specifically methylates the N7 position of a guanine in 16S rRNA. In Alkaliphilus oremlandii (strain OhILAs) (Clostridium oremlandii (strain OhILAs)), this protein is Ribosomal RNA small subunit methyltransferase G.